Consider the following 249-residue polypeptide: Flagellar L-ring protein (249 aa).

The N-terminal stretch at 1-25 is a signal peptide; sequence MSRLRTSHALRTAAALVAVGCLASG. A lipid anchor (N-palmitoyl cysteine) is attached at Cys-26. A lipid anchor (S-diacylglycerol cysteine) is attached at Cys-26.

This sequence belongs to the FlgH family. The basal body constitutes a major portion of the flagellar organelle and consists of four rings (L,P,S, and M) mounted on a central rod.

The protein localises to the cell outer membrane. It is found in the bacterial flagellum basal body. In terms of biological role, assembles around the rod to form the L-ring and probably protects the motor/basal body from shearing forces during rotation. The polypeptide is Flagellar L-ring protein (Afipia carboxidovorans (strain ATCC 49405 / DSM 1227 / KCTC 32145 / OM5) (Oligotropha carboxidovorans)).